Consider the following 529-residue polypeptide: Zinc metalloproteinase MspA (529 aa).

Residues 1 to 24 form the signal peptide; that stretch reads MHHNYYLSPLAVALALGMVSPAKA. The propeptide occupies 25–204; that stretch reads ADPILLQNAS…PFVQWNDIKT (180 aa). His-365 lines the Zn(2+) pocket. Glu-366 is an active-site residue. 2 residues coordinate Zn(2+): His-369 and Glu-389. Catalysis depends on His-451, which acts as the Proton donor.

It belongs to the peptidase M4 family. Zn(2+) serves as cofactor.

The sequence is that of Zinc metalloproteinase MspA (mspA) from Legionella longbeachae.